Reading from the N-terminus, the 402-residue chain is Heat stress transcription factor A-6a (402 aa).

The tract at residues 1–28 (MLKPQTPRARRAAHPNSHMASSSSSSSL) is disordered. A coiled-coil region spans residues 212–258 (EVVSLKRDRAALRAEVIMLKQQYNACKSQLIAMEEMVRNIERRQQQT). The tract at residues 216 to 266 (LKRDRAALRAEVIMLKQQYNACKSQLIAMEEMVRNIERRQQQTIGFFAKVL) is hydrophobic repeat HR-A/B. Residues 290–293 (KRQR) carry the Nuclear localization signal motif. The short motif at 349–358 (DDVWEELDAL) is the AHA element.

This sequence belongs to the HSF family. Class A subfamily. In terms of assembly, homotrimer. Exhibits temperature-dependent phosphorylation.

The protein resides in the nucleus. Transcriptional regulator that specifically binds DNA of heat shock promoter elements (HSE). The chain is Heat stress transcription factor A-6a (HSFA6B) from Oryza sativa subsp. japonica (Rice).